Reading from the N-terminus, the 167-residue chain is uncharacterized protein (167 aa).

Residues 9-167 (PVMRRLTLQD…DCEVRMLREL (159 aa)) form the N-acetyltransferase domain.

Belongs to the acetyltransferase family.

This is an uncharacterized protein from Escherichia coli (strain K12).